The sequence spans 453 residues: Cysteine--tRNA ligase (453 aa).

Cys-31 is a binding site for Zn(2+). Positions 33–43 (PTVYDNPHIGN) match the 'HIGH' region motif. Residues Cys-213, His-238, and Glu-242 each coordinate Zn(2+). A 'KMSKS' region motif is present at residues 271-275 (KMAKS). Residue Lys-274 participates in ATP binding.

This sequence belongs to the class-I aminoacyl-tRNA synthetase family. In terms of assembly, monomer. Zn(2+) is required as a cofactor.

It is found in the cytoplasm. The enzyme catalyses tRNA(Cys) + L-cysteine + ATP = L-cysteinyl-tRNA(Cys) + AMP + diphosphate. The chain is Cysteine--tRNA ligase from Pelagibacter ubique (strain HTCC1062).